Here is a 247-residue protein sequence, read N- to C-terminus: 2,3-bisphosphoglycerate-dependent phosphoglycerate mutase (247 aa).

Substrate contacts are provided by residues 8 to 15, 21 to 22, arginine 60, 87 to 90, lysine 98, 114 to 115, and 183 to 184; these read RHGESQWN, TG, ERHY, RR, and GN. Histidine 9 functions as the Tele-phosphohistidine intermediate in the catalytic mechanism. Residue glutamate 87 is the Proton donor/acceptor of the active site.

This sequence belongs to the phosphoglycerate mutase family. BPG-dependent PGAM subfamily.

It catalyses the reaction (2R)-2-phosphoglycerate = (2R)-3-phosphoglycerate. The protein operates within carbohydrate degradation; glycolysis; pyruvate from D-glyceraldehyde 3-phosphate: step 3/5. Catalyzes the interconversion of 2-phosphoglycerate and 3-phosphoglycerate. This Chlorobaculum tepidum (strain ATCC 49652 / DSM 12025 / NBRC 103806 / TLS) (Chlorobium tepidum) protein is 2,3-bisphosphoglycerate-dependent phosphoglycerate mutase.